We begin with the raw amino-acid sequence, 180 residues long: Calcineurin subunit B type 1 (180 aa).

A lipid anchor (N-myristoyl glycine) is attached at glycine 2. 4 consecutive EF-hand domains span residues 25 to 60 (AELK…ALNP), 62 to 92 (LERV…LSHK), 94 to 129 (TKED…MVGT), and 135 to 170 (QLQQ…QEGI). 14 residues coordinate Ca(2+): aspartate 38, aspartate 40, serine 42, threonine 44, glutamate 49, aspartate 70, asparagine 72, aspartate 74, glutamate 76, glutamate 81, aspartate 107, aspartate 109, aspartate 111, and glutamate 118. The segment at 138-143 (QIVDKT) is canA/calcineurin A binding. Positions 148, 150, 152, 154, and 159 each coordinate Ca(2+).

This sequence belongs to the calcineurin regulatory subunit family. As to quaternary structure, forms a complex composed of a calmodulin-dependent catalytic subunit canA (also known as calcineurin A) and a regulatory Ca(2+)-binding subunit cnbA (also known as calcineurin B).

Regulatory subunit of calcineurin, a calcium-dependent, calmodulin stimulated protein phosphatase. Confers calcium sensitivity. Important for stalk formation. The sequence is that of Calcineurin subunit B type 1 (cnbA) from Dictyostelium discoideum (Social amoeba).